Reading from the N-terminus, the 213-residue chain is ATP-dependent dethiobiotin synthetase BioD (213 aa).

12–17 (EVGKTY) is an ATP binding site. Thr-16 lines the Mg(2+) pocket. The active site involves Lys-37. Residues Asp-46, 107–110 (EGVG), and 167–168 (NN) each bind ATP. 2 residues coordinate Mg(2+): Asp-46 and Glu-107.

It belongs to the dethiobiotin synthetase family. Homodimer. Mg(2+) is required as a cofactor.

The protein localises to the cytoplasm. The enzyme catalyses (7R,8S)-7,8-diammoniononanoate + CO2 + ATP = (4R,5S)-dethiobiotin + ADP + phosphate + 3 H(+). The protein operates within cofactor biosynthesis; biotin biosynthesis; biotin from 7,8-diaminononanoate: step 1/2. Functionally, catalyzes a mechanistically unusual reaction, the ATP-dependent insertion of CO2 between the N7 and N8 nitrogen atoms of 7,8-diaminopelargonic acid (DAPA, also called 7,8-diammoniononanoate) to form a ureido ring. The polypeptide is ATP-dependent dethiobiotin synthetase BioD (Akkermansia muciniphila (strain ATCC BAA-835 / DSM 22959 / JCM 33894 / BCRC 81048 / CCUG 64013 / CIP 107961 / Muc)).